The primary structure comprises 546 residues: Chaperonin GroEL (546 aa).

Residues 30–33 (TLGP), 87–91 (DGTTT), glycine 414, 477–479 (NAL), and aspartate 493 contribute to the ATP site.

This sequence belongs to the chaperonin (HSP60) family. As to quaternary structure, forms a cylinder of 14 subunits composed of two heptameric rings stacked back-to-back. Interacts with the co-chaperonin GroES.

The protein resides in the cytoplasm. It carries out the reaction ATP + H2O + a folded polypeptide = ADP + phosphate + an unfolded polypeptide.. Functionally, together with its co-chaperonin GroES, plays an essential role in assisting protein folding. The GroEL-GroES system forms a nano-cage that allows encapsulation of the non-native substrate proteins and provides a physical environment optimized to promote and accelerate protein folding. The chain is Chaperonin GroEL from Syntrophomonas wolfei subsp. wolfei (strain DSM 2245B / Goettingen).